The sequence spans 296 residues: Cobalamin trafficking protein CblD (296 aa).

The N-terminal 38 residues, 1–38 (MAHVLCNRARLVSYLPGFCSLVKRVINPRAFSTAGSSG), are a transit peptide targeting the mitochondrion. Lysine 203 carries the post-translational modification N6-acetyllysine.

As to quaternary structure, heterodimer with MMACHC. Forms a multiprotein complex with MMACHC, MTR and MTRR.

Its subcellular location is the cytoplasm. The protein localises to the mitochondrion. Its function is as follows. Involved in cobalamin metabolism and trafficking. Plays a role in regulating the biosynthesis and the proportion of two coenzymes, methylcob(III)alamin (MeCbl) and 5'-deoxyadenosylcobalamin (AdoCbl). Promotes oxidation of cob(II)alamin bound to MMACHC. The processing of cobalamin in the cytosol occurs in a multiprotein complex composed of at least MMACHC, MMADHC, MTRR (methionine synthase reductase) and MTR (methionine synthase) which may contribute to shuttle safely and efficiently cobalamin towards MTR in order to produce methionine. This is Cobalamin trafficking protein CblD (Mmadhc) from Rattus norvegicus (Rat).